The sequence spans 206 residues: Outer-membrane lipoprotein carrier protein (206 aa).

The signal sequence occupies residues M1–A21.

It belongs to the LolA family. As to quaternary structure, monomer.

It is found in the periplasm. Functionally, participates in the translocation of lipoproteins from the inner membrane to the outer membrane. Only forms a complex with a lipoprotein if the residue after the N-terminal Cys is not an aspartate (The Asp acts as a targeting signal to indicate that the lipoprotein should stay in the inner membrane). The polypeptide is Outer-membrane lipoprotein carrier protein (Nitrosomonas europaea (strain ATCC 19718 / CIP 103999 / KCTC 2705 / NBRC 14298)).